An 876-amino-acid polypeptide reads, in one-letter code: Alanine--tRNA ligase (876 aa).

His560, His564, Cys662, and His666 together coordinate Zn(2+).

It belongs to the class-II aminoacyl-tRNA synthetase family. The cofactor is Zn(2+).

The protein localises to the cytoplasm. The enzyme catalyses tRNA(Ala) + L-alanine + ATP = L-alanyl-tRNA(Ala) + AMP + diphosphate. Its function is as follows. Catalyzes the attachment of alanine to tRNA(Ala) in a two-step reaction: alanine is first activated by ATP to form Ala-AMP and then transferred to the acceptor end of tRNA(Ala). Also edits incorrectly charged Ser-tRNA(Ala) and Gly-tRNA(Ala) via its editing domain. In Synechococcus sp. (strain ATCC 27144 / PCC 6301 / SAUG 1402/1) (Anacystis nidulans), this protein is Alanine--tRNA ligase.